A 96-amino-acid polypeptide reads, in one-letter code: Aspartyl/glutamyl-tRNA(Asn/Gln) amidotransferase subunit C (96 aa).

It belongs to the GatC family. In terms of assembly, heterotrimer of A, B and C subunits.

It carries out the reaction L-glutamyl-tRNA(Gln) + L-glutamine + ATP + H2O = L-glutaminyl-tRNA(Gln) + L-glutamate + ADP + phosphate + H(+). The catalysed reaction is L-aspartyl-tRNA(Asn) + L-glutamine + ATP + H2O = L-asparaginyl-tRNA(Asn) + L-glutamate + ADP + phosphate + 2 H(+). Functionally, allows the formation of correctly charged Asn-tRNA(Asn) or Gln-tRNA(Gln) through the transamidation of misacylated Asp-tRNA(Asn) or Glu-tRNA(Gln) in organisms which lack either or both of asparaginyl-tRNA or glutaminyl-tRNA synthetases. The reaction takes place in the presence of glutamine and ATP through an activated phospho-Asp-tRNA(Asn) or phospho-Glu-tRNA(Gln). This is Aspartyl/glutamyl-tRNA(Asn/Gln) amidotransferase subunit C from Deinococcus deserti (strain DSM 17065 / CIP 109153 / LMG 22923 / VCD115).